We begin with the raw amino-acid sequence, 32 residues long: Yop proteins translocation protein A (32 aa).

In Yersinia pestis, this protein is Yop proteins translocation protein A (yscA).